The chain runs to 337 residues: Putative carboxypeptidase TP_0688 (337 aa).

S118 (nucleophile) is an active-site residue. Active-site charge relay system residues include E234 and H302.

This sequence belongs to the peptidase S66 family.

This Treponema pallidum (strain Nichols) protein is Putative carboxypeptidase TP_0688.